The primary structure comprises 430 residues: Aspartate aminotransferase, mitochondrial (430 aa).

A mitochondrion-targeting transit peptide spans 1-29 (MALLHSGRVLPGIAAAFHPGLAAAASARA). The residue at position 48 (Thr48) is a Phosphothreonine. Residue Lys59 is modified to N6-acetyllysine. A substrate-binding site is contributed by Gly65. At Lys73 the chain carries N6-acetyllysine; alternate. Lys73 is subject to N6-succinyllysine; alternate. An N6-acetyllysine modification is found at Lys82. Residue Lys90 is modified to N6-acetyllysine; alternate. N6-succinyllysine; alternate is present on Lys90. Tyr96 bears the 3'-nitrotyrosine; alternate mark. A Phosphotyrosine; alternate modification is found at Tyr96. 2 positions are modified to N6-acetyllysine; alternate: Lys107 and Lys122. An N6-succinyllysine; alternate mark is found at Lys107 and Lys122. Ser143 is modified (phosphoserine). Lys159 carries the post-translational modification N6-acetyllysine; alternate. N6-succinyllysine; alternate is present on Lys159. Trp162 contributes to the substrate binding site. The residue at position 185 (Lys185) is an N6-acetyllysine; alternate. Lys185 carries the N6-succinyllysine; alternate modification. Asn215 contributes to the substrate binding site. At Lys227 the chain carries N6-succinyllysine. Position 234 is an N6-acetyllysine (Lys234). An N6-acetyllysine; alternate mark is found at Lys279 and Lys296. Lys279 is modified (N6-(pyridoxal phosphate)lysine; alternate). Lys296 is subject to N6-succinyllysine; alternate. Lys302 bears the N6-acetyllysine mark. Lys309 carries the N6-acetyllysine; alternate modification. Lys309 is subject to N6-succinyllysine; alternate. Position 313 is an asymmetric dimethylarginine (Arg313). Thr333 is subject to Phosphothreonine. At Lys338 the chain carries N6-acetyllysine; alternate. Lys338 is subject to N6-succinyllysine; alternate. Lys345 is subject to N6-acetyllysine. An N6-acetyllysine; alternate modification is found at Lys363. At Lys363 the chain carries N6-succinyllysine; alternate. An N6-acetyllysine mark is found at Lys364 and Lys387. Lys396 and Lys404 each carry N6-acetyllysine; alternate. Lys396 and Lys404 each carry N6-succinyllysine; alternate. Arg407 is a substrate binding site.

Belongs to the class-I pyridoxal-phosphate-dependent aminotransferase family. In terms of assembly, homodimer. Pyridoxal 5'-phosphate is required as a cofactor.

Its subcellular location is the mitochondrion matrix. It localises to the cell membrane. It carries out the reaction L-aspartate + 2-oxoglutarate = oxaloacetate + L-glutamate. The catalysed reaction is L-kynurenine + 2-oxoglutarate = kynurenate + L-glutamate + H2O. Functionally, catalyzes the irreversible transamination of the L-tryptophan metabolite L-kynurenine to form kynurenic acid (KA). As a member of the malate-aspartate shuttle, it has a key role in the intracellular NAD(H) redox balance. Is important for metabolite exchange between mitochondria and cytosol, and for amino acid metabolism. Facilitates cellular uptake of long-chain free fatty acids. This is Aspartate aminotransferase, mitochondrial from Homo sapiens (Human).